The sequence spans 499 residues: Apolipoprotein N-acyltransferase (499 aa).

Helical transmembrane passes span 18–38, 50–70, 82–102, 105–125, 156–176, and 182–202; these read FSPY…LIIT, LGFL…YISI, IIII…FVIL, FFFP…AWMI, PIIG…MCVL, and SYYP…LNFF. One can recognise a CN hydrolase domain in the interval 217 to 461; sequence IQGNISQHTY…NDFLLEEVFS (245 aa). Residue glutamate 257 is the Proton acceptor of the active site. Residue lysine 320 is part of the active site. Residue cysteine 372 is the Nucleophile of the active site. A helical transmembrane segment spans residues 476-496; sequence LLFFSIICFIISFFIKIKLIF.

Belongs to the CN hydrolase family. Apolipoprotein N-acyltransferase subfamily.

The protein localises to the cell membrane. The catalysed reaction is N-terminal S-1,2-diacyl-sn-glyceryl-L-cysteinyl-[lipoprotein] + a glycerophospholipid = N-acyl-S-1,2-diacyl-sn-glyceryl-L-cysteinyl-[lipoprotein] + a 2-acyl-sn-glycero-3-phospholipid + H(+). It functions in the pathway protein modification; lipoprotein biosynthesis (N-acyl transfer). Functionally, catalyzes the phospholipid dependent N-acylation of the N-terminal cysteine of apolipoprotein, the last step in lipoprotein maturation. The protein is Apolipoprotein N-acyltransferase of Wigglesworthia glossinidia brevipalpis.